The sequence spans 128 residues: Phosphoribosyl-AMP cyclohydrolase (128 aa).

Asp-86 is a binding site for Mg(2+). Cys-87 serves as a coordination point for Zn(2+). Mg(2+)-binding residues include Asp-88 and Asp-90. Zn(2+) is bound by residues Cys-103 and Cys-110.

This sequence belongs to the PRA-CH family. Homodimer. The cofactor is Mg(2+). It depends on Zn(2+) as a cofactor.

It localises to the cytoplasm. It catalyses the reaction 1-(5-phospho-beta-D-ribosyl)-5'-AMP + H2O = 1-(5-phospho-beta-D-ribosyl)-5-[(5-phospho-beta-D-ribosylamino)methylideneamino]imidazole-4-carboxamide. It functions in the pathway amino-acid biosynthesis; L-histidine biosynthesis; L-histidine from 5-phospho-alpha-D-ribose 1-diphosphate: step 3/9. Catalyzes the hydrolysis of the adenine ring of phosphoribosyl-AMP. In Roseobacter denitrificans (strain ATCC 33942 / OCh 114) (Erythrobacter sp. (strain OCh 114)), this protein is Phosphoribosyl-AMP cyclohydrolase.